A 473-amino-acid chain; its full sequence is Photosystem II CP43 reaction center protein (473 aa).

Positions 1 to 14 are excised as a propeptide; sequence MKTLYSLRRFYPVE. Thr15 bears the N-acetylthreonine mark. Thr15 is subject to Phosphothreonine. 5 helical membrane-spanning segments follow: residues 69 to 93, 134 to 155, 178 to 200, 255 to 275, and 291 to 312; these read LFEVAHFVPEKPMYEQGLILLPHLA, LLGPETLEESFPFFGYVWKDRN, KALYFGGVYDTWAPGGGDVRKIT, KPFAWARRALVWSGEAYLSYS, and WFNNTAYPSEFYGPTGPEASQA. Glu367 provides a ligand contact to [CaMn4O5] cluster. A helical membrane pass occupies residues 447–471; it reads RARAAAAGFEKGIDRDFEPVLFMTP.

This sequence belongs to the PsbB/PsbC family. PsbC subfamily. PSII is composed of 1 copy each of membrane proteins PsbA, PsbB, PsbC, PsbD, PsbE, PsbF, PsbH, PsbI, PsbJ, PsbK, PsbL, PsbM, PsbT, PsbX, PsbY, PsbZ, Psb30/Ycf12, at least 3 peripheral proteins of the oxygen-evolving complex and a large number of cofactors. It forms dimeric complexes. The cofactor is Binds multiple chlorophylls and provides some of the ligands for the Ca-4Mn-5O cluster of the oxygen-evolving complex. It may also provide a ligand for a Cl- that is required for oxygen evolution. PSII binds additional chlorophylls, carotenoids and specific lipids..

The protein localises to the plastid. It is found in the chloroplast thylakoid membrane. Functionally, one of the components of the core complex of photosystem II (PSII). It binds chlorophyll and helps catalyze the primary light-induced photochemical processes of PSII. PSII is a light-driven water:plastoquinone oxidoreductase, using light energy to abstract electrons from H(2)O, generating O(2) and a proton gradient subsequently used for ATP formation. This chain is Photosystem II CP43 reaction center protein, found in Cucumis sativus (Cucumber).